A 512-amino-acid chain; its full sequence is Cytochrome P450 monooxygenase gliC (512 aa).

The signal sequence occupies residues 1-19 (MAFTLTILVPCMVLALVAA). Residues N118, N421, and N434 are each glycosylated (N-linked (GlcNAc...) asparagine). C452 contacts heme.

This sequence belongs to the cytochrome P450 family. The cofactor is heme.

The protein operates within mycotoxin biosynthesis. In terms of biological role, cytochrome P450 monooxygenase; part of the gene cluster that mediates the biosynthesis of gliotoxin, a member of the epipolythiodioxopiperazine (ETP) class of toxins characterized by a disulfide bridged cyclic dipeptide. The first step in gliotoxin biosynthesis is the condensation of serine and phenylalanine to form the cyclo-L-phenylalanyl-L-serine diketopiperazine (DKP) by the NRPS gliP. GliP is also able to produce the DKP cyclo-L-tryptophanyl-L-serine, suggesting that the substrate specificity of the first adenylation (A) domain in gliP is sufficiently relaxed to accommodate both L-Phe and L-Trp. The cytochrome P450 monooxygenase gliC has been shown to catalyze the subsequent hydroxylation of the alpha-carbon of L-Phe in cyclo-L-phenylalanyl-L-serine whereas the second cytochrome P450 enzyme, gliF, is presumably involved in the modification of the DKP side chain. The glutathione S-transferase (GST) gliG then forms a bis-glutathionylated biosynthetic intermediate which is responsible for the sulfurization of gliotoxin. This bis-glutathionylated intermediate is subsequently processed by the gamma-glutamyl cyclotransferase gliK to remove both gamma-glutamyl moieties. Subsequent processing via gliI yields a biosynthetic intermediate, which is N-methylated via the N-methyltransferase gliN, before the gliotoxin oxidoreductase gliT-mediated disulfide bridge closure. GliN-mediated amide methylation confers stability to ETP, damping the spontaneous formation of tri- and tetrasulfides. Intracellular dithiol gliotoxin oxidized by gliT is subsequently effluxed by gliA. Gliotoxin contributes to pathogenesis during invasive aspergillosis. In macrophages and neutrophils, gliotoxin showed inhibition of various different cell functions including cytokine production, antigen presentation, phagocytosis, and production of reactive oxygen species. This Aspergillus fumigatus (strain ATCC MYA-4609 / CBS 101355 / FGSC A1100 / Af293) (Neosartorya fumigata) protein is Cytochrome P450 monooxygenase gliC.